The primary structure comprises 361 residues: MSNSNSAKVRVAVLYGGRSAEHSVSCVSAGAIIAHLDPEKYEVIPVGITTDGAWVVGESDPERLRLVDRTMPEVQRREEIRPSLDPAHRGEFHFADGSLYATADVIFPVLHGRFGEDGTIQGMFALSDIPVVGPGVLSSAAGMDKEFTKKLMAAEGLPIGREVILRDRAELTDAEKKLLGLPVFVKPARGGSSIGISKVSRWEDLPAAVDLARQHDEKVIVESEIVGPEVECGVLQYPDGRIVASLPAMLRGTEDGEGGFYDFDTKYLDNVVTAEIPAPLDEEIIELVQSLAVETFQALACEGLARVDFFVTANGPVLNEINTMPGFTPISMYPQMFAASGVGYEELLDVLVQQALHRSSN.

Positions 149–353 (KKLMAAEGLP…YEELLDVLVQ (205 aa)) constitute an ATP-grasp domain. 176-231 (KKLLGLPVFVKPARGGSSIGISKVSRWEDLPAAVDLARQHDEKVIVESEIVGPEVE) serves as a coordination point for ATP. The Mg(2+) site is built by Asp-308, Glu-320, and Asn-322.

The protein belongs to the D-alanine--D-alanine ligase family. It depends on Mg(2+) as a cofactor. Mn(2+) is required as a cofactor.

It localises to the cytoplasm. It catalyses the reaction 2 D-alanine + ATP = D-alanyl-D-alanine + ADP + phosphate + H(+). The protein operates within cell wall biogenesis; peptidoglycan biosynthesis. In terms of biological role, cell wall formation. The polypeptide is D-alanine--D-alanine ligase (Corynebacterium efficiens (strain DSM 44549 / YS-314 / AJ 12310 / JCM 11189 / NBRC 100395)).